The primary structure comprises 505 residues: Cytochrome P450 76A2 (505 aa).

Position 448 (Cys-448) interacts with heme.

Belongs to the cytochrome P450 family. Heme is required as a cofactor.

The chain is Cytochrome P450 76A2 (CYP76A2) from Solanum melongena (Eggplant).